We begin with the raw amino-acid sequence, 170 residues long: Peptide deformylase (170 aa).

Cys-91 and His-133 together coordinate Fe cation. Residue Glu-134 is part of the active site. His-137 is a Fe cation binding site.

Belongs to the polypeptide deformylase family. Requires Fe(2+) as cofactor.

It carries out the reaction N-terminal N-formyl-L-methionyl-[peptide] + H2O = N-terminal L-methionyl-[peptide] + formate. Functionally, removes the formyl group from the N-terminal Met of newly synthesized proteins. Requires at least a dipeptide for an efficient rate of reaction. N-terminal L-methionine is a prerequisite for activity but the enzyme has broad specificity at other positions. This is Peptide deformylase from Aeromonas salmonicida (strain A449).